We begin with the raw amino-acid sequence, 417 residues long: Gamma-glutamyl phosphate reductase (417 aa).

This sequence belongs to the gamma-glutamyl phosphate reductase family.

Its subcellular location is the cytoplasm. It carries out the reaction L-glutamate 5-semialdehyde + phosphate + NADP(+) = L-glutamyl 5-phosphate + NADPH + H(+). It participates in amino-acid biosynthesis; L-proline biosynthesis; L-glutamate 5-semialdehyde from L-glutamate: step 2/2. Functionally, catalyzes the NADPH-dependent reduction of L-glutamate 5-phosphate into L-glutamate 5-semialdehyde and phosphate. The product spontaneously undergoes cyclization to form 1-pyrroline-5-carboxylate. The sequence is that of Gamma-glutamyl phosphate reductase from Proteus mirabilis (strain HI4320).